The chain runs to 422 residues: Glutamyl-tRNA reductase (422 aa).

Substrate-binding positions include threonine 49 to arginine 52, serine 108, glutamate 113 to glutamine 115, and glutamine 119. Cysteine 50 (nucleophile) is an active-site residue. NADP(+) is bound at residue glycine 188–isoleucine 193.

It belongs to the glutamyl-tRNA reductase family. In terms of assembly, homodimer.

The catalysed reaction is (S)-4-amino-5-oxopentanoate + tRNA(Glu) + NADP(+) = L-glutamyl-tRNA(Glu) + NADPH + H(+). Its pathway is porphyrin-containing compound metabolism; protoporphyrin-IX biosynthesis; 5-aminolevulinate from L-glutamyl-tRNA(Glu): step 1/2. Its function is as follows. Catalyzes the NADPH-dependent reduction of glutamyl-tRNA(Glu) to glutamate 1-semialdehyde (GSA). This Marinomonas sp. (strain MWYL1) protein is Glutamyl-tRNA reductase.